Here is a 94-residue protein sequence, read N- to C-terminus: Long neurotoxin LNTX37 (94 aa).

Residues 1-21 (MKTLLLTLVVVTIMCLDLGYT) form the signal peptide. 5 cysteine pairs are disulfide-bonded: Cys-24/Cys-43, Cys-36/Cys-64, Cys-49/Cys-53, Cys-68/Cys-79, and Cys-80/Cys-85.

It belongs to the three-finger toxin family. Long-chain subfamily. Type II alpha-neurotoxin sub-subfamily. Expressed by the venom gland.

It is found in the secreted. Its function is as follows. Binds with high affinity to muscular (alpha-1/CHRNA1) and neuronal (alpha-7/CHRNA7) nicotinic acetylcholine receptor (nAChR) and inhibits acetylcholine from binding to the receptor, thereby impairing neuromuscular and neuronal transmission. This is Long neurotoxin LNTX37 from Ophiophagus hannah (King cobra).